The primary structure comprises 448 residues: Phosphoglucosamine mutase (448 aa).

The Phosphoserine intermediate role is filled by serine 100. Mg(2+) contacts are provided by serine 100, aspartate 240, aspartate 242, and aspartate 244. The residue at position 100 (serine 100) is a Phosphoserine.

It belongs to the phosphohexose mutase family. Mg(2+) is required as a cofactor. In terms of processing, activated by phosphorylation.

It catalyses the reaction alpha-D-glucosamine 1-phosphate = D-glucosamine 6-phosphate. In terms of biological role, catalyzes the conversion of glucosamine-6-phosphate to glucosamine-1-phosphate. This chain is Phosphoglucosamine mutase, found in Geobacillus thermodenitrificans (strain NG80-2).